A 367-amino-acid chain; its full sequence is Mitogen-activated protein kinase 12 (367 aa).

Residues 27-311 (YRDLQPVGSG…AGEALAHPYF (285 aa)) form the Protein kinase domain. ATP-binding positions include 33–41 (VGSGAYGAV) and lysine 56. The Proton acceptor role is filled by aspartate 153. Threonine 183 carries the phosphothreonine; by MAP2K3 and MAP2K6 modification. A TXY motif is present at residues 183-185 (TGY). A Phosphotyrosine modification is found at tyrosine 185.

The protein belongs to the protein kinase superfamily. CMGC Ser/Thr protein kinase family. MAP kinase subfamily. Monomer. Interacts with the PDZ domain of the syntrophin SNTA1. Interacts with SH3BP5. Interacts with LIN7C, SCRIB and SYNJ2BP. Interacts with PTPN4; this interaction induces the activation of PTPN4 phosphatase activity. The cofactor is Mg(2+). Post-translationally, dually phosphorylated on Thr-183 and Tyr-185 by MAP2K3/MKK3 and MAP2K6/MKK6, which activates the enzyme. In terms of processing, ubiquitinated. Ubiquitination leads to degradation by the proteasome pathway. As to expression, highly expressed in skeletal muscle and heart.

Its subcellular location is the cytoplasm. It is found in the nucleus. It localises to the mitochondrion. The enzyme catalyses L-seryl-[protein] + ATP = O-phospho-L-seryl-[protein] + ADP + H(+). The catalysed reaction is L-threonyl-[protein] + ATP = O-phospho-L-threonyl-[protein] + ADP + H(+). Activated by phosphorylation on threonine and tyrosine. MAP2K3/MKK3 and MAP2K6/MKK6 are both essential for the activation of MAPK12 induced by environmental stress, whereas MAP2K6/MKK6 is the major MAPK12 activator in response to TNF-alpha. Its function is as follows. Serine/threonine kinase which acts as an essential component of the MAP kinase signal transduction pathway. MAPK12 is one of the four p38 MAPKs which play an important role in the cascades of cellular responses evoked by extracellular stimuli such as pro-inflammatory cytokines or physical stress leading to direct activation of transcription factors such as ELK1 and ATF2. Accordingly, p38 MAPKs phosphorylate a broad range of proteins and it has been estimated that they may have approximately 200 to 300 substrates each. Some of the targets are downstream kinases such as MAPKAPK2, which are activated through phosphorylation and further phosphorylate additional targets. Plays a role in myoblast differentiation and also in the down-regulation of cyclin D1 in response to hypoxia in adrenal cells suggesting MAPK12 may inhibit cell proliferation while promoting differentiation. Phosphorylates DLG1. Following osmotic shock, MAPK12 in the cell nucleus increases its association with nuclear DLG1, thereby causing dissociation of DLG1-SFPQ complexes. This function is independent of its catalytic activity and could affect mRNA processing and/or gene transcription to aid cell adaptation to osmolarity changes in the environment. Regulates UV-induced checkpoint signaling and repair of UV-induced DNA damage and G2 arrest after gamma-radiation exposure. MAPK12 is involved in the regulation of SLC2A1 expression and basal glucose uptake in L6 myotubes; and negatively regulates SLC2A4 expression and contraction-mediated glucose uptake in adult skeletal muscle. C-Jun (JUN) phosphorylation is stimulated by MAPK14 and inhibited by MAPK12, leading to a distinct AP-1 regulation. MAPK12 is required for the normal kinetochore localization of PLK1, prevents chromosomal instability and supports mitotic cell viability. MAPK12-signaling is also positively regulating the expansion of transient amplifying myogenic precursor cells during muscle growth and regeneration. In Homo sapiens (Human), this protein is Mitogen-activated protein kinase 12 (MAPK12).